A 1939-amino-acid chain; its full sequence is Myosin-6 (1939 aa).

The 50-residue stretch at 32–81 folds into the Myosin N-terminal SH3-like domain; the sequence is DIRTECFVPDDKEEFVKAKIVSREGGKVTAETENGKTVTVKEDQVMQQNP. A Myosin motor domain is found at 85-780; sequence DKIEDMAMLT…LLGLLEEMRD (696 aa). N6,N6,N6-trimethyllysine is present on Lys-129. 178-185 serves as a coordination point for ATP; sequence GESGAGKT. Position 379 is a phosphothreonine (Thr-379). Ser-417 carries the post-translational modification Phosphoserine. 2 actin-binding regions span residues 657–679 and 759–773; these read LNKL…IPNE and KFGH…GLLG. In terms of domain architecture, IQ spans 783 to 812; it reads LSRIITRIQAQARGQLMRIEFKKMVERRDA. The stretch at 842–1939 forms a coiled coil; the sequence is LKSAETEKEM…GAKQKMHDEE (1098 aa). Ser-1090 and Ser-1139 each carry phosphoserine. The residue at position 1261 (Tyr-1261) is a Phosphotyrosine. Position 1271 is a phosphoserine (Ser-1271). Residues Thr-1277 and Thr-1284 each carry the phosphothreonine modification. Ser-1309 carries the post-translational modification Phosphoserine. A Phosphotyrosine modification is found at Tyr-1310. Thr-1311 carries the post-translational modification Phosphothreonine. Ser-1512 carries the post-translational modification Phosphoserine. A phosphothreonine mark is found at Thr-1515 and Thr-1681. The segment at 1908-1939 is disordered; the sequence is AEERADIAESQVNKLRAKSRDIGAKQKMHDEE. The span at 1925-1939 shows a compositional bias: basic and acidic residues; the sequence is KSRDIGAKQKMHDEE.

Belongs to the TRAFAC class myosin-kinesin ATPase superfamily. Myosin family. Muscle myosin is a hexameric protein that consists of 2 heavy chain subunits (MHC), 2 alkali light chain subunits (MLC) and 2 regulatory light chain subunits (MLC-2).

Its subcellular location is the cytoplasm. It localises to the myofibril. Functionally, muscle contraction. The protein is Myosin-6 (MYH6) of Mesocricetus auratus (Golden hamster).